Consider the following 244-residue polypeptide: Probable fimbrial assembly protein FimC, serogroup H1 (244 aa).

The polypeptide is Probable fimbrial assembly protein FimC, serogroup H1 (fimC) (Dichelobacter nodosus (Bacteroides nodosus)).